A 570-amino-acid chain; its full sequence is Dihydroxy-acid dehydratase (570 aa).

Cysteine 61 lines the [2Fe-2S] cluster pocket. Residue aspartate 94 coordinates Mg(2+). Cysteine 135 lines the [2Fe-2S] cluster pocket. Mg(2+) is bound by residues aspartate 136 and lysine 137. Position 137 is an N6-carboxylysine (lysine 137). Cysteine 207 provides a ligand contact to [2Fe-2S] cluster. Glutamate 459 serves as a coordination point for Mg(2+). Residue serine 485 is the Proton acceptor of the active site.

It belongs to the IlvD/Edd family. As to quaternary structure, homodimer. [2Fe-2S] cluster is required as a cofactor. Requires Mg(2+) as cofactor.

It catalyses the reaction (2R)-2,3-dihydroxy-3-methylbutanoate = 3-methyl-2-oxobutanoate + H2O. It carries out the reaction (2R,3R)-2,3-dihydroxy-3-methylpentanoate = (S)-3-methyl-2-oxopentanoate + H2O. It participates in amino-acid biosynthesis; L-isoleucine biosynthesis; L-isoleucine from 2-oxobutanoate: step 3/4. Its pathway is amino-acid biosynthesis; L-valine biosynthesis; L-valine from pyruvate: step 3/4. Its function is as follows. Functions in the biosynthesis of branched-chain amino acids. Catalyzes the dehydration of (2R,3R)-2,3-dihydroxy-3-methylpentanoate (2,3-dihydroxy-3-methylvalerate) into 2-oxo-3-methylpentanoate (2-oxo-3-methylvalerate) and of (2R)-2,3-dihydroxy-3-methylbutanoate (2,3-dihydroxyisovalerate) into 2-oxo-3-methylbutanoate (2-oxoisovalerate), the penultimate precursor to L-isoleucine and L-valine, respectively. The chain is Dihydroxy-acid dehydratase from Lactococcus lactis subsp. cremoris (strain SK11).